A 245-amino-acid chain; its full sequence is Enolase-phosphatase E1 (245 aa).

Belongs to the HAD-like hydrolase superfamily. MasA/MtnC family. In terms of assembly, monomer. The cofactor is Mg(2+).

It carries out the reaction 5-methylsulfanyl-2,3-dioxopentyl phosphate + H2O = 1,2-dihydroxy-5-(methylsulfanyl)pent-1-en-3-one + phosphate. Its pathway is amino-acid biosynthesis; L-methionine biosynthesis via salvage pathway; L-methionine from S-methyl-5-thio-alpha-D-ribose 1-phosphate: step 3/6. It participates in amino-acid biosynthesis; L-methionine biosynthesis via salvage pathway; L-methionine from S-methyl-5-thio-alpha-D-ribose 1-phosphate: step 4/6. In terms of biological role, bifunctional enzyme that catalyzes the enolization of 2,3-diketo-5-methylthiopentyl-1-phosphate (DK-MTP-1-P) into the intermediate 2-hydroxy-3-keto-5-methylthiopentenyl-1-phosphate (HK-MTPenyl-1-P), which is then dephosphorylated to form the acireductone 1,2-dihydroxy-3-keto-5-methylthiopentene (DHK-MTPene). This is Enolase-phosphatase E1 from Prochlorococcus marinus (strain MIT 9313).